The following is a 187-amino-acid chain: GTP cyclohydrolase 1 (187 aa).

Zn(2+) contacts are provided by Cys-81, His-84, and Cys-152.

It belongs to the GTP cyclohydrolase I family. Homomer.

The catalysed reaction is GTP + H2O = 7,8-dihydroneopterin 3'-triphosphate + formate + H(+). Its pathway is cofactor biosynthesis; 7,8-dihydroneopterin triphosphate biosynthesis; 7,8-dihydroneopterin triphosphate from GTP: step 1/1. In Pyrobaculum neutrophilum (strain DSM 2338 / JCM 9278 / NBRC 100436 / V24Sta) (Thermoproteus neutrophilus), this protein is GTP cyclohydrolase 1.